The chain runs to 289 residues: ATP synthase subunit a (289 aa).

6 helical membrane passes run 43-63 (AFHL…LFIF), 103-123 (VIAP…AVDL), 160-180 (FCVF…GGFI), 193-213 (IFVQ…TLIA), 232-252 (VFIL…GLGV), and 259-279 (AVFH…LTIV).

Belongs to the ATPase A chain family. F-type ATPases have 2 components, CF(1) - the catalytic core - and CF(0) - the membrane proton channel. CF(1) has five subunits: alpha(3), beta(3), gamma(1), delta(1), epsilon(1). CF(0) has three main subunits: a(1), b(2) and c(9-12). The alpha and beta chains form an alternating ring which encloses part of the gamma chain. CF(1) is attached to CF(0) by a central stalk formed by the gamma and epsilon chains, while a peripheral stalk is formed by the delta and b chains.

The protein localises to the cell inner membrane. In terms of biological role, key component of the proton channel; it plays a direct role in the translocation of protons across the membrane. In Pseudomonas putida (strain GB-1), this protein is ATP synthase subunit a.